The chain runs to 294 residues: Cytidine deaminase (294 aa).

CMP/dCMP-type deaminase domains follow at residues 48 to 168 and 186 to 294; these read DEDA…FGPK and LTGD…VLLA. 89-91 is a binding site for substrate; the sequence is NME. Zn(2+) is bound at residue H102. The active-site Proton donor is the E104. 2 residues coordinate Zn(2+): C129 and C132.

This sequence belongs to the cytidine and deoxycytidylate deaminase family. In terms of assembly, homodimer. Zn(2+) serves as cofactor.

It catalyses the reaction cytidine + H2O + H(+) = uridine + NH4(+). The catalysed reaction is 2'-deoxycytidine + H2O + H(+) = 2'-deoxyuridine + NH4(+). Functionally, this enzyme scavenges exogenous and endogenous cytidine and 2'-deoxycytidine for UMP synthesis. The polypeptide is Cytidine deaminase (Escherichia coli O7:K1 (strain IAI39 / ExPEC)).